Reading from the N-terminus, the 107-residue chain is UPF0145 protein ETA_21660 (107 aa).

This sequence belongs to the UPF0145 family.

This is UPF0145 protein ETA_21660 from Erwinia tasmaniensis (strain DSM 17950 / CFBP 7177 / CIP 109463 / NCPPB 4357 / Et1/99).